Consider the following 357-residue polypeptide: DNA primase small subunit PriS (357 aa).

Active-site residues include aspartate 105, aspartate 107, and aspartate 259.

The protein belongs to the eukaryotic-type primase small subunit family. As to quaternary structure, heterodimer of a small subunit (PriS) and a large subunit (PriL). The cofactor is Mg(2+). It depends on Mn(2+) as a cofactor.

Functionally, catalytic subunit of DNA primase, an RNA polymerase that catalyzes the synthesis of short RNA molecules used as primers for DNA polymerase during DNA replication. The small subunit contains the primase catalytic core and has DNA synthesis activity on its own. Binding to the large subunit stabilizes and modulates the activity, increasing the rate of DNA synthesis while decreasing the length of the DNA fragments, and conferring RNA synthesis capability. The DNA polymerase activity may enable DNA primase to also catalyze primer extension after primer synthesis. May also play a role in DNA repair. In Methanococcus maripaludis (strain DSM 14266 / JCM 13030 / NBRC 101832 / S2 / LL), this protein is DNA primase small subunit PriS.